A 121-amino-acid chain; its full sequence is Large ribosomal subunit protein uL14 (121 aa).

This sequence belongs to the universal ribosomal protein uL14 family. Part of the 50S ribosomal subunit. Forms a cluster with proteins L3 and L19. In the 70S ribosome, L14 and L19 interact and together make contacts with the 16S rRNA in bridges B5 and B8.

Functionally, binds to 23S rRNA. Forms part of two intersubunit bridges in the 70S ribosome. This is Large ribosomal subunit protein uL14 from Aquifex pyrophilus.